We begin with the raw amino-acid sequence, 714 residues long: Fatty acid oxidation complex subunit alpha (714 aa).

The tract at residues 1–190 is enoyl-CoA hydratase; sequence MEMASAFTLN…KLGLVDDVVP (190 aa). A 3-hydroxyacyl-CoA dehydrogenase region spans residues 306–714; the sequence is APLNSVGILG…FWKTTATDLQ (409 aa).

It in the N-terminal section; belongs to the enoyl-CoA hydratase/isomerase family. In the central section; belongs to the 3-hydroxyacyl-CoA dehydrogenase family. In terms of assembly, heterotetramer of two alpha chains (FadJ) and two beta chains (FadI).

It is found in the cytoplasm. The enzyme catalyses a (3S)-3-hydroxyacyl-CoA = a (2E)-enoyl-CoA + H2O. The catalysed reaction is a 4-saturated-(3S)-3-hydroxyacyl-CoA = a (3E)-enoyl-CoA + H2O. It catalyses the reaction a (3S)-3-hydroxyacyl-CoA + NAD(+) = a 3-oxoacyl-CoA + NADH + H(+). It carries out the reaction (3S)-3-hydroxybutanoyl-CoA = (3R)-3-hydroxybutanoyl-CoA. The protein operates within lipid metabolism; fatty acid beta-oxidation. Its function is as follows. Catalyzes the formation of a hydroxyacyl-CoA by addition of water on enoyl-CoA. Also exhibits 3-hydroxyacyl-CoA epimerase and 3-hydroxyacyl-CoA dehydrogenase activities. The protein is Fatty acid oxidation complex subunit alpha of Escherichia coli O81 (strain ED1a).